The sequence spans 738 residues: Polyphosphate kinase (738 aa).

Positions 1–48 (MIGNDRWVTEIETGPVTEARPDTNAREPGDRTPAAPPAATPAATTDQL) are disordered. A compositionally biased stretch (basic and acidic residues) spans 19-30 (ARPDTNAREPGD). N91 contributes to the ATP binding site. R427 and R457 together coordinate Mg(2+). H487 functions as the Phosphohistidine intermediate in the catalytic mechanism. 3 residues coordinate ATP: Y520, R620, and H648.

Belongs to the polyphosphate kinase 1 (PPK1) family. Requires Mg(2+) as cofactor. An intermediate of this reaction is the autophosphorylated ppk in which a phosphate is covalently linked to a histidine residue through a N-P bond.

It carries out the reaction [phosphate](n) + ATP = [phosphate](n+1) + ADP. Catalyzes the reversible transfer of the terminal phosphate of ATP to form a long-chain polyphosphate (polyP). The polypeptide is Polyphosphate kinase (Mycobacterium ulcerans (strain Agy99)).